The primary structure comprises 443 residues: Xaa-Pro dipeptidase (443 aa).

Mn(2+) is bound by residues Asp-246, Asp-257, His-339, Glu-384, and Glu-423.

This sequence belongs to the peptidase M24B family. Bacterial-type prolidase subfamily. The cofactor is Mn(2+).

It carries out the reaction Xaa-L-Pro dipeptide + H2O = an L-alpha-amino acid + L-proline. In terms of biological role, splits dipeptides with a prolyl residue in the C-terminal position. The polypeptide is Xaa-Pro dipeptidase (Escherichia coli O157:H7).